We begin with the raw amino-acid sequence, 255 residues long: 5'-nucleotidase SurE (255 aa).

A divalent metal cation contacts are provided by aspartate 8, aspartate 9, serine 40, and asparagine 93.

This sequence belongs to the SurE nucleotidase family. Requires a divalent metal cation as cofactor.

It is found in the cytoplasm. It catalyses the reaction a ribonucleoside 5'-phosphate + H2O = a ribonucleoside + phosphate. In terms of biological role, nucleotidase that shows phosphatase activity on nucleoside 5'-monophosphates. The sequence is that of 5'-nucleotidase SurE from Nitrobacter hamburgensis (strain DSM 10229 / NCIMB 13809 / X14).